A 211-amino-acid chain; its full sequence is Small ribosomal subunit protein uS3 (211 aa).

Positions I16–E85 constitute a KH type-2 domain.

Belongs to the universal ribosomal protein uS3 family. In terms of assembly, part of the 30S ribosomal subunit.

Its function is as follows. Binds the lower part of the 30S subunit head. The chain is Small ribosomal subunit protein uS3 from Methanococcus maripaludis (strain DSM 14266 / JCM 13030 / NBRC 101832 / S2 / LL).